Consider the following 574-residue polypeptide: Sulfate adenylyltransferase (574 aa).

The N-terminal stretch occupies residues 1–169 (MANTPHGGVL…LEAVNKLNHY (169 aa)). The catalytic stretch occupies residues 170–394 (DYVGLRYTPA…LRESSPPRAL (225 aa)). Gln-197 lines the sulfate pocket. ATP-binding positions include 197 to 200 (QTRN) and 291 to 294 (GRDH). Active-site residues include Thr-198, Arg-199, and Asn-200. Arg-199 is a binding site for sulfate. Ala-295 is a sulfate binding site. Val-333 serves as a coordination point for ATP. Positions 395 to 574 (QGFTIFLTGY…LESEGYFERL (180 aa)) are allosteric regulation domain; adenylyl-sulfate kinase-like. 3'-phosphoadenylyl sulfate contacts are provided by residues 434 to 437 (DTVR), Arg-451, 477 to 478 (IA), and Arg-516.

The protein in the N-terminal section; belongs to the sulfate adenylyltransferase family. In the C-terminal section; belongs to the APS kinase family. Homohexamer. Dimer of trimers.

Its subcellular location is the cytoplasm. It catalyses the reaction sulfate + ATP + H(+) = adenosine 5'-phosphosulfate + diphosphate. It functions in the pathway sulfur metabolism; hydrogen sulfide biosynthesis; sulfite from sulfate: step 1/3. With respect to regulation, allosterically inhibited by 3'-phosphoadenosine 5'-phosphosulfate (PAPS). Functionally, catalyzes the first intracellular reaction of sulfate assimilation, forming adenosine-5'-phosphosulfate (APS) from inorganic sulfate and ATP. Plays an important role in sulfate activation as a component of the biosynthesis pathway of sulfur-containing amino acids. The sequence is that of Sulfate adenylyltransferase from Emericella nidulans (strain FGSC A4 / ATCC 38163 / CBS 112.46 / NRRL 194 / M139) (Aspergillus nidulans).